Reading from the N-terminus, the 396-residue chain is Elongation factor Tu (396 aa).

The region spanning 10-206 is the tr-type G domain; that stretch reads KPHCNIGTIG…NVDEYIPQPE (197 aa). Residues 19 to 26 are G1; that stretch reads GHVDHGKT. 19-26 contributes to the GTP binding site; it reads GHVDHGKT. Position 26 (Thr-26) interacts with Mg(2+). Positions 60 to 64 are G2; sequence GITIS. Residues 81 to 84 are G3; it reads DCPG. Residues 81 to 85 and 136 to 139 contribute to the GTP site; these read DCPGH and NKCD. The G4 stretch occupies residues 136-139; the sequence is NKCD. Positions 174–176 are G5; the sequence is SAL.

Belongs to the TRAFAC class translation factor GTPase superfamily. Classic translation factor GTPase family. EF-Tu/EF-1A subfamily. In terms of assembly, monomer.

It is found in the cytoplasm. The catalysed reaction is GTP + H2O = GDP + phosphate + H(+). In terms of biological role, GTP hydrolase that promotes the GTP-dependent binding of aminoacyl-tRNA to the A-site of ribosomes during protein biosynthesis. This chain is Elongation factor Tu, found in Bradyrhizobium sp. (strain BTAi1 / ATCC BAA-1182).